A 61-amino-acid polypeptide reads, in one-letter code: Small ribosomal subunit protein uS14 (61 aa).

Zn(2+) contacts are provided by Cys-24, Cys-27, Cys-40, and Cys-43.

It belongs to the universal ribosomal protein uS14 family. Zinc-binding uS14 subfamily. Part of the 30S ribosomal subunit. Contacts proteins S3 and S10. Zn(2+) is required as a cofactor.

Functionally, binds 16S rRNA, required for the assembly of 30S particles and may also be responsible for determining the conformation of the 16S rRNA at the A site. In Petrotoga mobilis (strain DSM 10674 / SJ95), this protein is Small ribosomal subunit protein uS14.